A 477-amino-acid polypeptide reads, in one-letter code: MKVTLPEFERAGVMVVGDVMLDRYWYGPTSRISPEAPVPVVKVNTIEERPGGAANVAMNIASLGANARLVGLTGIDDAARALSKSLADVNVKCDFVSVPTHPTITKLRVLSRNQQLIRLDFEEGFEGVDPQPLHERINQALSSIGALVLSDYAKGALASVQQMIQLARKAGVPVLIDPKSTDFERYRGATLLTPNLSEFEAVVGKCKTEEEIVERGMKLIADYELSALLVTRSEQGMSLLQPGKAPLHMPTQAQEVYDVTGAGDTVIGVLAATLAAGNSLEEACFFANAAAGVVVGKLGTSTVSPIELENAVRGRADTGFGVMTEEELKLAVAAARKRGEKVVMTNGVFDILHAGHVSYLANARKLGDRLIVAVNSDASTKRLKGDSRPVNPLEQRMIVLGALEAVDWVVSFEEDTPQRLIAGILPDLLVKGGDYKPEEIAGSKEVWANGGEVLVLNFEDGCSTTNIIKKIQQDKKG.

The tract at residues 1–318 (MKVTLPEFER…ENAVRGRADT (318 aa)) is ribokinase. K179 bears the N6-acetyllysine mark. 195-198 (NLSE) is an ATP binding site. Residue D264 is part of the active site. Residues 344–477 (MTNGVFDILH…IKKIQQDKKG (134 aa)) are cytidylyltransferase.

In the N-terminal section; belongs to the carbohydrate kinase PfkB family. This sequence in the C-terminal section; belongs to the cytidylyltransferase family. Homodimer.

It carries out the reaction D-glycero-beta-D-manno-heptose 7-phosphate + ATP = D-glycero-beta-D-manno-heptose 1,7-bisphosphate + ADP + H(+). It catalyses the reaction D-glycero-beta-D-manno-heptose 1-phosphate + ATP + H(+) = ADP-D-glycero-beta-D-manno-heptose + diphosphate. It participates in nucleotide-sugar biosynthesis; ADP-L-glycero-beta-D-manno-heptose biosynthesis; ADP-L-glycero-beta-D-manno-heptose from D-glycero-beta-D-manno-heptose 7-phosphate: step 1/4. The protein operates within nucleotide-sugar biosynthesis; ADP-L-glycero-beta-D-manno-heptose biosynthesis; ADP-L-glycero-beta-D-manno-heptose from D-glycero-beta-D-manno-heptose 7-phosphate: step 3/4. Catalyzes the phosphorylation of D-glycero-D-manno-heptose 7-phosphate at the C-1 position to selectively form D-glycero-beta-D-manno-heptose-1,7-bisphosphate. Its function is as follows. Catalyzes the ADP transfer from ATP to D-glycero-beta-D-manno-heptose 1-phosphate, yielding ADP-D-glycero-beta-D-manno-heptose. The polypeptide is Bifunctional protein HldE (Escherichia coli O9:H4 (strain HS)).